The following is a 222-amino-acid chain: Eukaryotic translation initiation factor 3 subunit K (222 aa).

The PCI domain maps to 46–208; sequence YDLEANLAVL…KIKTKNITEK (163 aa).

Belongs to the eIF-3 subunit K family. Component of the eukaryotic translation initiation factor 3 (eIF-3) complex. The eIF-3 complex interacts with pix.

It localises to the cytoplasm. Component of the eukaryotic translation initiation factor 3 (eIF-3) complex, which is involved in protein synthesis of a specialized repertoire of mRNAs and, together with other initiation factors, stimulates binding of mRNA and methionyl-tRNAi to the 40S ribosome. The eIF-3 complex specifically targets and initiates translation of a subset of mRNAs involved in cell proliferation. This is Eukaryotic translation initiation factor 3 subunit K from Drosophila grimshawi (Hawaiian fruit fly).